Consider the following 1014-residue polypeptide: Collagen alpha-1(I) chain (1014 aa).

The disordered stretch occupies residues 1 to 1014; the sequence is SYGYDEKGGI…PGPPGPPGPP (1014 aa). The segment covering 9-22 has biased composition (low complexity); the sequence is GISVPGPMGPSGPR. 4-hydroxyproline occurs at positions 25, 28, 30, 39, 42, 45, 60, 75, 81, 90, and 96. Positions 33–51 are enriched in low complexity; it reads QGFQGPPGEPGEPGSSGPM. Residues 63–77 show a composition bias toward basic and acidic residues; sequence NGDDGEAGKPGRPGE. A 5-hydroxylysine; alternate modification is found at Lys-99. An O-linked (Gal...) hydroxylysine; alternate glycan is attached at Lys-99. Ser-105 carries the post-translational modification Phosphoserine. The span at 113–129 shows a compositional bias: low complexity; sequence DAGPAGPKGEPGSPGEN. 16 positions are modified to 4-hydroxyproline: Pro-123, Pro-126, Pro-132, Pro-141, Pro-147, Pro-168, Pro-177, Pro-180, Pro-207, Pro-210, Pro-222, Pro-228, Pro-237, Pro-243, Pro-246, and Pro-261. Over residues 147 to 165 the composition is skewed to low complexity; it reads PGASGPAGARGNDGATGAA. Pro residues predominate over residues 167 to 179; that stretch reads PPGPTGPAGPPGF. Low complexity predominate over residues 213–252; it reads AGAAGPAGNPGADGQPGAKGANGAPGIAGAPGFPGARGPS. At Lys-264 the chain carries 5-hydroxylysine. 4-hydroxyproline is present on residues Pro-270, Pro-273, Pro-285, Pro-294, Pro-309, Pro-315, Pro-324, and Pro-330. The segment covering 319–328 has biased composition (gly residues); it reads GERGGPGSRG. Lys-339 is modified (5-hydroxylysine). Pro-348, Pro-357, Pro-363, Pro-369, Pro-378, Pro-381, Pro-390, Pro-399, Pro-405, Pro-417, Pro-426, Pro-435, Pro-438, Pro-456, Pro-473, Pro-479, Pro-485, Pro-491, Pro-497, Pro-503, Pro-515, Pro-524, Pro-535, Pro-548, Pro-554, and Pro-563 each carry 4-hydroxyproline. Residues 372 to 398 show a composition bias toward low complexity; that stretch reads KGLTGSPGSPGPDGKTGPPGPAGQDGR. Low complexity predominate over residues 407–426; sequence ARGQAGVMGFPGPKGAAGEP. The segment covering 485–494 has biased composition (low complexity); that stretch reads PGEAGKPGEQ. Lys-575 is modified (5-hydroxylysine). 4-hydroxyproline is present on residues Pro-581, Pro-596, and Pro-602. Residues 608 to 622 show a composition bias toward low complexity; sequence SGPSGPAGPTGARGA. Ser-611 is subject to Phosphoserine. 4-hydroxyproline occurs at positions 623, 629, 632, 641, 647, 674, and 683. The segment covering 635 to 665 has biased composition (low complexity); the sequence is AGFAGPPGADGQPGAKGEPGDAGAKGDAGPS. A 5-hydroxylysine modification is found at Lys-686. Residues 691–707 are compositionally biased toward low complexity; the sequence is SAGPPGATGFPGAAGRV. 2 positions are modified to 4-hydroxyproline: Pro-695 and Pro-701. 3-hydroxyproline is present on Pro-709. Residues Pro-710, Pro-719, Pro-722, Pro-743, Pro-752, Pro-760, Pro-769, Pro-787, Pro-796, Pro-799, Pro-805, Pro-820, Pro-826, Pro-832, Pro-841, and Pro-847 each carry the 4-hydroxyproline modification. A compositionally biased stretch (low complexity) spans 736–745; sequence ETGPAGRPGE. Positions 757–769 are enriched in low complexity; it reads KGSPGADGPAGAP. Residues 819-829 show a composition bias toward pro residues; sequence PPGPVGPPGLA. Lys-856 bears the 5-hydroxylysine mark. The segment covering 864–879 has biased composition (pro residues); that stretch reads PGPPGAPGAPGAPGPV. Residues Pro-867, Pro-870, and Pro-873 each carry the 4-hydroxyproline modification. Low complexity predominate over residues 900 to 914; the sequence is AGPAGARGPAGPQGP. Basic and acidic residues predominate over residues 915 to 929; that stretch reads RGDKGETGEQGDRGI. A 5-hydroxylysine modification is found at Lys-918. Lys-930 carries the post-translational modification 5-hydroxylysine; alternate. The O-linked (Gal...) hydroxylysine; alternate glycan is linked to Lys-930. 4 positions are modified to 4-hydroxyproline: Pro-945, Pro-948, Pro-966, and Pro-981. Residues 948-981 show a composition bias toward low complexity; the sequence is PGEQGPSGASGPAGPRGPPGSAGSPGKDGLNGLP. Pro-986 carries the post-translational modification 3-hydroxyproline. The residue at position 987 (Pro-987) is a 4-hydroxyproline. Over residues 999–1014 the composition is skewed to pro residues; the sequence is VGPPGPPGPPGPPGPP. Pro-1001 bears the 3-hydroxyproline mark. Pro-1002 bears the 4-hydroxyproline mark. Pro-1004 is modified (3-hydroxyproline). 4-hydroxyproline is present on Pro-1005. Pro-1007 carries the 3-hydroxyproline modification. 4-hydroxyproline occurs at positions 1008, 1011, and 1014.

Belongs to the fibrillar collagen family. As to quaternary structure, trimers of one alpha 2(I) and two alpha 1(I) chains. Post-translationally, contains mostly 4-hydroxyproline. Proline residues at the third position of the tripeptide repeating unit (G-X-Y) are hydroxylated in some or all of the chains. Contains 3-hydroxyproline at a few sites. This modification occurs on the first proline residue in the sequence motif Gly-Pro-Hyp, where Hyp is 4-hydroxyproline. In terms of processing, lysine residues at the third position of the tripeptide repeating unit (G-X-Y) are 5-hydroxylated in some or all of the chains. Post-translationally, O-glycosylated on hydroxylated lysine residues. The O-linked glycan consists of a Glc-Gal disaccharide. In terms of tissue distribution, expressed in bones.

It localises to the secreted. The protein resides in the extracellular space. Its subcellular location is the extracellular matrix. In terms of biological role, type I collagen is a member of group I collagen (fibrillar forming collagen). The polypeptide is Collagen alpha-1(I) chain (Megatherium americanum (Giant ground sloth)).